Here is a 284-residue protein sequence, read N- to C-terminus: Succinate dehydrogenase [ubiquinone] iron-sulfur subunit, mitochondrial (284 aa).

The N-terminal 26 residues, 1–26 (MAAVVFSLRRSGPVFRLPGVLQVCRG), are a transit peptide targeting the mitochondrion. The 94-residue stretch at 44–137 (KKFAIYRWDP…VSKIYPLPHM (94 aa)) folds into the 2Fe-2S ferredoxin-type domain. The [2Fe-2S] cluster site is built by C97, C102, C105, and C117. The region spanning 180–210 (DRDKLDGLYECILCACCSTSCPSYWWNADKY) is the 4Fe-4S ferredoxin-type domain. Positions 190, 193, and 196 each coordinate [4Fe-4S] cluster. C200 provides a ligand contact to [3Fe-4S] cluster. Residue W205 participates in a ubiquinone binding. [3Fe-4S] cluster is bound by residues C247 and C253. C257 is a binding site for [4Fe-4S] cluster.

The protein belongs to the succinate dehydrogenase/fumarate reductase iron-sulfur protein family. Component of complex II composed of four subunits: the flavoprotein (FP) sdha, iron-sulfur protein (IP) sdhb, and a cytochrome b composed of sdhc and sdhd. [2Fe-2S] cluster is required as a cofactor. [3Fe-4S] cluster serves as cofactor. It depends on [4Fe-4S] cluster as a cofactor.

The protein localises to the mitochondrion inner membrane. The catalysed reaction is a quinone + succinate = fumarate + a quinol. The enzyme catalyses (R)-malate + a quinone = enol-oxaloacetate + a quinol. It carries out the reaction (S)-malate + a quinone = enol-oxaloacetate + a quinol. Its pathway is carbohydrate metabolism; tricarboxylic acid cycle; fumarate from succinate (eukaryal route): step 1/1. Its activity is regulated as follows. Enol-oxaloacetate inhibits the succinate dehydrogenase activity. Iron-sulfur protein (IP) subunit of the succinate dehydrogenase complex (mitochondrial respiratory chain complex II), responsible for transferring electrons from succinate to ubiquinone (coenzyme Q). SDH also oxidizes malate to the non-canonical enol form of oxaloacetate, enol-oxaloacetate. Enol-oxaloacetate, which is a potent inhibitor of the succinate dehydrogenase activity, is further isomerized into keto-oxaloacetate. The polypeptide is Succinate dehydrogenase [ubiquinone] iron-sulfur subunit, mitochondrial (sdhb) (Xenopus tropicalis (Western clawed frog)).